The following is a 3114-amino-acid chain: Centromere protein F (3114 aa).

Residues 1–481 form an interaction with SNAP25 and required for localization to the cytoplasm region; sequence MSWALEEWKE…IKENELRRSM (481 aa). Residues 13–131 adopt a coiled-coil conformation; it reads PTRALQKIQE…KSELERSQQA (119 aa). At Ser106 the chain carries Phosphoserine. A phosphothreonine mark is found at Thr144, Thr151, and Thr154. Tyr158 bears the Phosphotyrosine mark. Residues 211–235 show a composition bias toward polar residues; it reads QASSSVFSWQQEKTPSHLSSNSQRT. The segment at 211 to 236 is disordered; it reads QASSSVFSWQQEKTPSHLSSNSQRTP. A phosphoserine mark is found at Ser242 and Ser276. The stretch at 280–685 forms a coiled coil; the sequence is LDQLKAQNQE…SVEIRNLHNV (406 aa). Phosphoserine is present on residues Ser773, Ser783, Ser821, Ser834, Ser838, and Ser876. 2 coiled-coil regions span residues 899-989 and 1196-1244; these read VAET…LNQE and LEVK…IRGD. 3 positions are modified to phosphoserine: Ser1248, Ser1255, and Ser1259. A coiled-coil region spans residues 1549–1646; sequence VEELESLCEV…ELEVARLQLQ (98 aa). A phosphoserine mark is found at Ser1651, Ser1652, and Ser1654. Disordered stretches follow at residues 1667 to 1690 and 1710 to 1746; these read RNESCDISKEHTSETTERTPKHDV and TETGAVKPTGECSGEQSPDTNYEPPGEDKTQGSSECI. Residues 1669–1690 are compositionally biased toward basic and acidic residues; that stretch reads ESCDISKEHTSETTERTPKHDV. Ser1726 is modified (phosphoserine). Thr1862 carries the phosphothreonine modification. 2 positions are modified to phosphoserine: Ser1868 and Ser1892. Coiled-coil stretches lie at residues 1890–2078 and 2107–2891; these read NDSW…LQAR and LSST…LCSQ. The tract at residues 2026-2351 is interaction with NDE1 and NDEL1; that stretch reads LLKDKTHLQE…ERELEIARTN (326 aa). 2 tandem repeats follow at residues 2111-2290 and 2293-2472. Positions 2111 to 2472 are 2 X 177 AA tandem repeats; that stretch reads QEEVHQLRRG…ACKAKEQNLS (362 aa). The sufficient for self-association stretch occupies residues 2392 to 2829; sequence SEKENLTNEL…QAAQEKQKTG (438 aa). A sufficient for centromere localization region spans residues 2392-3017; that stretch reads SEKENLTNEL…ATRTSPRLAA (626 aa). A phosphoserine mark is found at Ser2416 and Ser2417. Position 2779 is an N6-acetyllysine (Lys2779). The sufficient for nuclear localization stretch occupies residues 2831-3017; that stretch reads VMDTKVDELT…ATRTSPRLAA (187 aa). The segment at 2891 to 2977 is disordered; that stretch reads QQSKQDSRGS…AEDTEGTEFE (87 aa). Phosphoserine occurs at positions 2900, 2911, 2922, and 2936. Positions 2919–2936 match the Nuclear localization signal motif; it reads KRLSSGQNKASGKRQRSS. Thr2949 carries the phosphothreonine modification. A phosphoserine mark is found at Ser2952, Ser2998, Ser3023, and Ser3026. The disordered stretch occupies residues 3024 to 3114; it reads PLSLGKENLA…SNGSENCKVQ (91 aa). The segment covering 3033 to 3045 has biased composition (polar residues); the sequence is AESSKPTAGGSRS. Ser3054, Ser3079, and Ser3083 each carry phosphoserine. Residues 3079–3089 show a composition bias toward basic and acidic residues; it reads SPTDSPREGLR. Residues 3105-3114 show a composition bias toward polar residues; sequence SNGSENCKVQ. Position 3111 is a cysteine methyl ester (Cys3111). Residue Cys3111 is the site of S-farnesyl cysteine attachment. A propeptide spans 3112–3114 (removed in mature form); that stretch reads KVQ.

Belongs to the centromere protein F family. As to quaternary structure, interacts with and STX4 (via C-terminus). Interacts (via N-terminus) with RBL1, RBL2 and SNAP25. Self-associates. Interacts with CENP-E and BUBR1 (via C-terminus). Interacts (via C-terminus) with NDE1, NDEL1 and RB1. Post-translationally, hyperphosphorylated during mitosis.

It is found in the cytoplasm. Its subcellular location is the perinuclear region. The protein localises to the nucleus matrix. The protein resides in the chromosome. It localises to the centromere. It is found in the kinetochore. Its subcellular location is the cytoskeleton. The protein localises to the spindle. In terms of biological role, required for kinetochore function and chromosome segregation in mitosis. Required for kinetochore localization of dynein, LIS1, NDE1 and NDEL1. Regulates recycling of the plasma membrane by acting as a link between recycling vesicles and the microtubule network though its association with STX4 and SNAP25. Acts as a potential inhibitor of pocket protein-mediated cellular processes during development by regulating the activity of RB proteins during cell division and proliferation. May play a regulatory or permissive role in the normal embryonic cardiomyocyte cell cycle and in promoting continued mitosis in transformed, abnormally dividing neonatal cardiomyocytes. Interaction with RB directs embryonic stem cells toward a cardiac lineage. Involved in the regulation of DNA synthesis and hence cell cycle progression, via its C-terminus. Has a potential role regulating skeletal myogenesis and in cell differentiation in embryogenesis. Involved in dendritic cell regulation of T-cell immunity against chlamydia. The polypeptide is Centromere protein F (CENPF) (Homo sapiens (Human)).